A 238-amino-acid polypeptide reads, in one-letter code: Pre-protein VI (238 aa).

The propeptide occupies 1 to 33; it reads MDAVNFSILAPRYGSHPMMSAWSGIGTSDMNGG. An amphipathic alpha-helix essential for membrane lytic activity region spans residues 34–54; it reads AFNWGGIWSGIKNFGSNVKNW. The involved in endosomal membrane lysis stretch occupies residues 36 to 53; it reads NWGGIWSGIKNFGSNVKN. An interaction with hexon protein region spans residues 48-74; that stretch reads GSNVKNWGSRAWNSQTGKLLRQKLNDT. Residues 67–76 carry the Nuclear export signal motif; sequence LRQKLNDTKV. A PPXY motif motif is present at residues 153-156; it reads PPSY. The segment at 187–212 is disordered; it reads TLELKPSDQPPPYSPQSSNMPVTAPV. The short motif at 219 to 230 is the Nuclear export signal element; the sequence is GTLANIVGVGLS. An interaction with hexon protein region spans residues 221-227; that stretch reads LANIVGV. The interval 228–238 is binds to importin alpha/beta, involved in hexon nuclear import; it reads GLSNVKRRRCF. The short motif at 233 to 236 is the Nuclear localization signal element; that stretch reads KRRR.

This sequence belongs to the adenoviridae protein VI family. Interacts with hexon protein; this interaction allows nuclear import of hexon trimers and possibly pre-capsid assembly. Interacts (via C-terminal NLS) with importin alpha/beta. As to quaternary structure, interacts (via PPxY motif) with host NEDD4 ubiquitine ligase; this interaction might play a role in virus intracellular transport during entry. Part of a complex composed of the core-capsid bridging protein, the endosome lysis protein VI and the hexon-linking protein VIII; these interactions bridge the virus core to the capsid. Interacts with peripentonal hexons; this interaction stabilizes the capsid by gluing two peripentonal hexons together and joining them with an adjacent group-of-nine hexon. In terms of assembly, heterodimer with the viral protease; disulfide-linked. Interacts with the viral protease. Ubiquitinated by Nedd4 following partial capsid disassembly; which might play a role in intracellular virus movement during entry. Post-translationally, contains the major nuclear import and export signals. Proteolytically removed during virion maturation. The processing of the C-terminus turns the precursor into a mature viral structural protein and abrogates its ability to promote hexon import and act as a potential chaperone protein.

The protein resides in the host nucleus. The protein localises to the host cytoplasm. Its subcellular location is the virion. In terms of biological role, during virus assembly, promotes hexon trimers nuclear import through nuclear pore complexes via an importin alpha/beta-dependent mechanism. By analogy to herpesviruses capsid assembly, might act as a chaperone to promote the formation of the icosahedral capsid. Functionally, structural component of the virion that provides increased stability to the particle shell through its interaction with the core-capsid bridging protein and the hexon-linking protein VIII. Fibers shedding during virus entry into host cell allows the endosome lysis protein to be exposed as a membrane-lytic peptide. Exhibits pH-independent membrane fragmentation activity and probably mediates viral rapid escape from host endosome via organellar membrane lysis. It is not clear if it then remains partially associated with the capsid and involved in the intracellular microtubule-dependent transport of capsid to the nucleus, or if it is lost during endosomal penetration. Cofactor that activates the viral protease. Binds to viral protease in a 1:1 ratio. The polypeptide is Pre-protein VI (Canine adenovirus serotype 1 (strain CLL) (CAdV-1)).